We begin with the raw amino-acid sequence, 530 residues long: Na(+)/H(+) antiporter NhaB (530 aa).

The next 12 membrane-spanning stretches (helical) occupy residues 13-33, 34-54, 90-110, 121-141, 145-165, 205-225, 241-261, 306-326, 351-371, 393-413, 455-475, and 481-501; these read FLGKAPDWYKIAILSFLVINP, LVFFFVDPFTAGWLLVVEFIF, LVANIEVLLLLVFMVAGIYFM, ILIGIKSKTALSVAFCFTAAF, FLDALTVIAVVISVAVGFYAI, LLMHAGVGTALGGVMTMVGEP, FIIRMLPITAPVFICGILTCI, GLIAVWLIVGLALHLAAVGLI, EEALPFTALLAVFFAVVAVII, LALFYVANGLLSMVSDNVFVG, GQAAFLFLLTSALAPLIQLSY, and MALPYTIVLALVGMFGIIFFL.

It belongs to the NhaB Na(+)/H(+) (TC 2.A.34) antiporter family.

The protein localises to the cell inner membrane. The enzyme catalyses 2 Na(+)(in) + 3 H(+)(out) = 2 Na(+)(out) + 3 H(+)(in). Na(+)/H(+) antiporter that extrudes sodium in exchange for external protons. In Aliivibrio fischeri (strain ATCC 700601 / ES114) (Vibrio fischeri), this protein is Na(+)/H(+) antiporter NhaB.